The sequence spans 461 residues: Cytochrome c biogenesis protein CcsB (461 aa).

Helical transmembrane passes span 32-52 (LRLAIALLLIIALFSISGTVI), 91-111 (TWWFLSLLVLFGTSLTACTFT), and 178-198 (IGPIIVHIGIVTILLGSIWGA).

Belongs to the Ccs1/CcsB family. In terms of assembly, may interact with CcsA.

It localises to the cellular thylakoid membrane. Functionally, required during biogenesis of c-type cytochromes (cytochrome c6 and cytochrome f) at the step of heme attachment. In Nostoc sp. (strain PCC 7120 / SAG 25.82 / UTEX 2576), this protein is Cytochrome c biogenesis protein CcsB.